Here is a 233-residue protein sequence, read N- to C-terminus: Probable endonuclease lcl3 (233 aa).

A helical membrane pass occupies residues 10 to 29 (ISLRNLSYIILTISTGIVIH). The TNase-like domain occupies 57-218 (NSLYGYVTSV…RKRKLGMHSL (162 aa)). R106 is a catalytic residue. D111 contacts Ca(2+). Residues E114 and R154 contribute to the active site.

Belongs to the LCL3 family.

It localises to the mitochondrion. Its subcellular location is the membrane. This Schizosaccharomyces japonicus (strain yFS275 / FY16936) (Fission yeast) protein is Probable endonuclease lcl3 (lcl3).